The sequence spans 333 residues: T-cell surface glycoprotein CD1b-1 (333 aa).

Residues M1–N18 form the signal peptide. At E19–G302 the chain is on the extracellular side. N-linked (GlcNAc...) asparagine glycans are attached at residues N38, N75, N146, and N258. Disulfide bonds link C120–C184 and C224–C279. In terms of domain architecture, Ig-like spans P185–W295. Residues L303–F323 form a helical membrane-spanning segment. Topologically, residues W324–L333 are cytoplasmic. An Internalization signal motif is present at residues Y329–I332.

In terms of assembly, heterodimer with B2M (beta-2-microglobulin). Interacts with saposin C.

It localises to the cell membrane. The protein localises to the endosome membrane. It is found in the lysosome membrane. In terms of biological role, antigen-presenting protein that binds self and non-self lipid and glycolipid antigens and presents them to T-cell receptors on natural killer T-cells. In Ovis aries (Sheep), this protein is T-cell surface glycoprotein CD1b-1.